Reading from the N-terminus, the 306-residue chain is Homeobox protein HMX3 (306 aa).

The tract at residues 95–181 (HTPRTEVPDK…DKKPCRKKKT (87 aa)) is disordered. Basic and acidic residues-rich tracts occupy residues 117-143 (GERDSPDPIHPLKTELGAKESESKSPE) and 153-174 (EEGKKDDSGEDWKKREDSPDKK). Positions 178-237 (KKKTRTVFSRSQVFQLESTFDMKRYLSSSERAGLAASLHLTETQVKIWFQNRRNKWKRQL) form a DNA-binding region, homeobox.

Belongs to the HMX homeobox family.

Its subcellular location is the nucleus. Its function is as follows. Transcription factor involved in specification of neuronal cell types and which is required for inner ear and hypothalamus development. Binds to the 5'-CAAGTG-3' core sequence. May act as a stage-specific inhibitor of anf1 in the anterior neural plate during the development. This chain is Homeobox protein HMX3 (hmx3), found in Xenopus laevis (African clawed frog).